Consider the following 151-residue polypeptide: Aspartate carbamoyltransferase regulatory chain (151 aa).

Residues Cys-107, Cys-112, Cys-135, and Cys-138 each contribute to the Zn(2+) site.

The protein belongs to the PyrI family. As to quaternary structure, contains catalytic and regulatory chains. It depends on Zn(2+) as a cofactor.

Functionally, involved in allosteric regulation of aspartate carbamoyltransferase. This chain is Aspartate carbamoyltransferase regulatory chain, found in Psychromonas ingrahamii (strain DSM 17664 / CCUG 51855 / 37).